The sequence spans 389 residues: Diaminopimelate decarboxylase (389 aa).

An N6-(pyridoxal phosphate)lysine modification is found at lysine 58. Pyridoxal 5'-phosphate is bound by residues glycine 233 and 271 to 274 (ELGR). Residues arginine 274, arginine 310, tyrosine 314, glutamate 342, and tyrosine 370 each coordinate substrate. Tyrosine 370 provides a ligand contact to pyridoxal 5'-phosphate.

This sequence belongs to the Orn/Lys/Arg decarboxylase class-II family. LysA subfamily. In terms of assembly, homodimer. Pyridoxal 5'-phosphate serves as cofactor.

It carries out the reaction meso-2,6-diaminopimelate + H(+) = L-lysine + CO2. Its pathway is amino-acid biosynthesis; L-lysine biosynthesis via DAP pathway; L-lysine from DL-2,6-diaminopimelate: step 1/1. Functionally, specifically catalyzes the decarboxylation of meso-diaminopimelate (meso-DAP) to L-lysine. The sequence is that of Diaminopimelate decarboxylase from Francisella tularensis subsp. holarctica (strain LVS).